We begin with the raw amino-acid sequence, 191 residues long: Acireductone dioxygenase 2 (191 aa).

Positions 102, 104, 108, and 146 each coordinate Fe(2+). Ni(2+)-binding residues include H102, H104, E108, and H146.

Belongs to the acireductone dioxygenase (ARD) family. As to quaternary structure, monomer. Requires Fe(2+) as cofactor. It depends on Ni(2+) as a cofactor.

The enzyme catalyses 1,2-dihydroxy-5-(methylsulfanyl)pent-1-en-3-one + O2 = 3-(methylsulfanyl)propanoate + CO + formate + 2 H(+). It catalyses the reaction 1,2-dihydroxy-5-(methylsulfanyl)pent-1-en-3-one + O2 = 4-methylsulfanyl-2-oxobutanoate + formate + 2 H(+). The protein operates within amino-acid biosynthesis; L-methionine biosynthesis via salvage pathway; L-methionine from S-methyl-5-thio-alpha-D-ribose 1-phosphate: step 5/6. Functionally, catalyzes 2 different reactions between oxygen and the acireductone 1,2-dihydroxy-3-keto-5-methylthiopentene (DHK-MTPene) depending upon the metal bound in the active site. Fe-containing acireductone dioxygenase (Fe-ARD) produces formate and 2-keto-4-methylthiobutyrate (KMTB), the alpha-ketoacid precursor of methionine in the methionine recycle pathway. Ni-containing acireductone dioxygenase (Ni-ARD) produces methylthiopropionate, carbon monoxide and formate, and does not lie on the methionine recycle pathway. The protein is Acireductone dioxygenase 2 of Nocardia farcinica (strain IFM 10152).